A 104-amino-acid chain; its full sequence is Large ribosomal subunit protein uL24 (104 aa).

The protein belongs to the universal ribosomal protein uL24 family. In terms of assembly, part of the 50S ribosomal subunit.

Its function is as follows. One of two assembly initiator proteins, it binds directly to the 5'-end of the 23S rRNA, where it nucleates assembly of the 50S subunit. One of the proteins that surrounds the polypeptide exit tunnel on the outside of the subunit. The sequence is that of Large ribosomal subunit protein uL24 from Shewanella oneidensis (strain ATCC 700550 / JCM 31522 / CIP 106686 / LMG 19005 / NCIMB 14063 / MR-1).